The following is a 363-amino-acid chain: Transcriptional regulator AacuR (363 aa).

Residues 1–24 form a disordered region; it reads MTSLQCPPPDRTRRSLSPTGPKFR. Positions 27-54 form a DNA-binding region, zn(2)-C6 fungal-type; it reads CKSCAASKIRCTKEKPQCARCVKRNMVC. Basic residues predominate over residues 63 to 72; sequence RRKPGARLKH. The tract at residues 63–104 is disordered; sequence RRKPGARLKHRESITTNAHHSPTTTTITTSRTTSSSPSASPK. The span at 76–102 shows a compositional bias: low complexity; the sequence is ITTNAHHSPTTTTITTSRTTSSSPSAS.

The protein resides in the nucleus. Functionally, transcriptional regulator; part of the gene cluster that mediates the biosynthesis of the tetrahydroxanthone dimer secalonic acid D. This chain is Transcriptional regulator AacuR, found in Aspergillus aculeatus (strain ATCC 16872 / CBS 172.66 / WB 5094).